Consider the following 217-residue polypeptide: Adenylate kinase (217 aa).

10–15 (GAGKGT) contacts ATP. An NMP region spans residues 30–59 (STGDMLRAAVKAGTPLGIEAKKVMDAGGLV). AMP is bound by residues threonine 31, arginine 36, 57–59 (GLV), 85–88 (GFPR), and glutamine 92. The segment at 122 to 159 (GRRAHLASGRTYHVKYNPPKVEGKDDVTGEDLVQRDDD) is LID. ATP contacts are provided by residues arginine 123 and 132–133 (TY). Arginine 156 and arginine 167 together coordinate AMP. Glycine 203 is an ATP binding site.

It belongs to the adenylate kinase family. In terms of assembly, monomer.

The protein localises to the cytoplasm. The enzyme catalyses AMP + ATP = 2 ADP. It functions in the pathway purine metabolism; AMP biosynthesis via salvage pathway; AMP from ADP: step 1/1. Catalyzes the reversible transfer of the terminal phosphate group between ATP and AMP. Plays an important role in cellular energy homeostasis and in adenine nucleotide metabolism. The sequence is that of Adenylate kinase from Azoarcus sp. (strain BH72).